We begin with the raw amino-acid sequence, 90 residues long: Small ribosomal subunit protein uS15c (90 aa).

Belongs to the universal ribosomal protein uS15 family. As to quaternary structure, part of the 30S ribosomal subunit.

The protein localises to the plastid. It is found in the chloroplast. This is Small ribosomal subunit protein uS15c (rps15) from Citrus sinensis (Sweet orange).